A 373-amino-acid polypeptide reads, in one-letter code: 3-dehydroquinate synthase (373 aa).

Residues 107–111 (GVIGD), 131–132 (TS), Lys144, and Lys153 each bind NAD(+). Positions 186, 249, and 267 each coordinate Zn(2+).

Belongs to the sugar phosphate cyclases superfamily. Dehydroquinate synthase family. Co(2+) is required as a cofactor. Requires Zn(2+) as cofactor. NAD(+) serves as cofactor.

Its subcellular location is the cytoplasm. The catalysed reaction is 7-phospho-2-dehydro-3-deoxy-D-arabino-heptonate = 3-dehydroquinate + phosphate. It participates in metabolic intermediate biosynthesis; chorismate biosynthesis; chorismate from D-erythrose 4-phosphate and phosphoenolpyruvate: step 2/7. Its function is as follows. Catalyzes the conversion of 3-deoxy-D-arabino-heptulosonate 7-phosphate (DAHP) to dehydroquinate (DHQ). The chain is 3-dehydroquinate synthase from Ruegeria sp. (strain TM1040) (Silicibacter sp.).